A 351-amino-acid polypeptide reads, in one-letter code: Putative aminodehydroquinate synthase (351 aa).

NAD(+) is bound by residues 65–68 (EPTK), 97–101 (GTTTD), 121–122 (TS), K134, K143, and 161–164 (YLTT). Zn(2+)-binding residues include E176, H225, and H241.

This sequence belongs to the sugar phosphate cyclases superfamily. aDHQS family. It depends on NAD(+) as a cofactor. Co(2+) is required as a cofactor. Requires Zn(2+) as cofactor.

In terms of biological role, may catalyze the conversion of 3,4-dideoxy-4-amino-D-arabino-heptulosonate 7-phosphate (aDAHP) to 5-deoxy-5-amino-3-dehydroquinate (aDHQ). Probably involved in the formation of 3-amino-5-hydroxybenzoic acid (AHBA), the precursor of rifamycin and related ansamycins. This chain is Putative aminodehydroquinate synthase, found in Amycolatopsis mediterranei (strain S699) (Nocardia mediterranei).